Consider the following 288-residue polypeptide: MIKFEKVNYTYQPNSPFASRALFDIDLEVKKGSYTALIGHTGSGKSTLLQHLNGLLQPTEGKVTVGDIVVSSTSKQKEIKPVRKKVGVVFQFPESQLFEETVLKDVAFGPQNFGIPKEKAEKIAAEKLEMVGLADEFWEKSPFELSGGQMRRVAIAGILAMEPEVLVLDEPTAGLDPKARIEMMQLFESIHQSGQTVVLVTHLMDDVADYADYVYLLEKGHIISCGTPSDVFQEVDFLKAHELGVPKATHFADQLQKTGAVAFEKLPITRAELVTLLTSLSVNSGGEN.

Positions 2-244 (IKFEKVNYTY…VDFLKAHELG (243 aa)) constitute an ABC transporter domain. 39 to 46 (GHTGSGKS) is a binding site for ATP. The Proton acceptor role is filled by glutamate 170.

This sequence belongs to the ABC transporter superfamily. Energy-coupling factor EcfA family. In terms of assembly, forms a stable energy-coupling factor (ECF) transporter complex composed of 2 membrane-embedded substrate-binding proteins (S component), 2 ATP-binding proteins (A component) and 2 transmembrane proteins (T component). In L.lactis forms a stable complex with EcfA' and EcfT and substrate-binding components. In E.coli forms a stable complex with EcfA, EcfT and individually with 3 tested substrate-binding components (BioY, NiaX and ThiT) with a stoichiometry of 1.1:1:1. The core ECF complex interacts with a number of substrate-specific binding components, including BioY, BioY2, HmpT, NiaX, PanT, QueT, RibU and ThiT.

Its subcellular location is the cell membrane. ATP-binding (A) component of a common energy-coupling factor (ECF) ABC-transporter complex. Unlike classic ABC transporters this ECF transporter provides the energy necessary to transport a number of different substrates. In this organism these probably include biotin, thiamine precursor, niacin, pantothenic acid, queuosine precursor, riboflavin and thiamine. Uptake of niacin or riboflavin into proteosomes containing EcfA1A2T and Niax or RibU has been demonstrated. Uptake requires hydrolyzable Mg-ATP and is substrate-specific; NiaX-containing proteosomes did not transport riboflavin. This is Energy-coupling factor transporter ATP-binding protein EcfA2 from Lactococcus lactis subsp. cremoris (strain MG1363).